The sequence spans 268 residues: Tryptophan synthase alpha chain (268 aa).

Residues glutamate 49 and aspartate 60 each act as proton acceptor in the active site.

The protein belongs to the TrpA family. As to quaternary structure, tetramer of two alpha and two beta chains.

It carries out the reaction (1S,2R)-1-C-(indol-3-yl)glycerol 3-phosphate + L-serine = D-glyceraldehyde 3-phosphate + L-tryptophan + H2O. It participates in amino-acid biosynthesis; L-tryptophan biosynthesis; L-tryptophan from chorismate: step 5/5. The alpha subunit is responsible for the aldol cleavage of indoleglycerol phosphate to indole and glyceraldehyde 3-phosphate. The sequence is that of Tryptophan synthase alpha chain from Shigella flexneri serotype 5b (strain 8401).